We begin with the raw amino-acid sequence, 299 residues long: Probable lipid kinase YegS-like (299 aa).

The DAGKc domain maps to 2–133 (EKNPITLLIL…IDIAKVNDGH (132 aa)). ATP contacts are provided by residues Thr40, 66–72 (GDGTVNE), and Thr95. Mg(2+)-binding residues include Leu215, Asp218, and Leu220. The active-site Proton acceptor is Glu271.

It belongs to the diacylglycerol/lipid kinase family. YegS lipid kinase subfamily. Mg(2+) is required as a cofactor. Requires Ca(2+) as cofactor.

It is found in the cytoplasm. Functionally, probably phosphorylates lipids; the in vivo substrate is unknown. This is Probable lipid kinase YegS-like from Pectobacterium atrosepticum (strain SCRI 1043 / ATCC BAA-672) (Erwinia carotovora subsp. atroseptica).